We begin with the raw amino-acid sequence, 154 residues long: Protein E6 (154 aa).

2 zinc fingers span residues 34 to 70 (CVFCKKALTASEVYNFAYTDLRVVYRDGYPYGVCKFC) and 107 to 143 (CYRCQHPLTPEEKQLHCDYKKRFHKISHMWTGSCLTC).

Belongs to the papillomaviridae E6 protein family. Forms homodimers. Interacts with ubiquitin-protein ligase UBE3A/E6-AP; this interaction stimulates UBE3A ubiquitin activity. Interacts with host TP53 and EP300; this interaction inhibits TP53 activity.

The protein localises to the host cytoplasm. It is found in the host nucleus. Functionally, plays a major role in the induction and maintenance of cellular transformation. E6 associates with host UBE3A/E6-AP ubiquitin-protein ligase and modulates its activity. Sequesters tumor suppressor TP53 in the host cytoplasm and modulates its activity by interacting with host EP300 that results in the reduction of TP53 acetylation and activation. In turn, apoptosis induced by DNA damage is inhibited. E6 also protects host keratinocytes from apoptosis by mediating the degradation of host BAK1. May also inhibit host immune response. This is Protein E6 from Human papillomavirus type 53.